The following is a 215-amino-acid chain: Ras-related protein Rab-42 (215 aa).

Residues Gly-19, Gly-21, Lys-22, Thr-23, and Thr-44 each coordinate GTP. Residues Thr-23, Thr-44, and Asp-68 each contribute to the Mg(2+) site. GTP-binding residues include Gly-71, Lys-128, Asp-130, Ala-157, and Lys-158. A disordered region spans residues 196–215; sequence HRSPNPRSSSRKQDSGTCQC. S-geranylgeranyl cysteine attachment occurs at residues Cys-213 and Cys-215.

This sequence belongs to the small GTPase superfamily. Rab family. The cofactor is Mg(2+).

The protein localises to the membrane. The enzyme catalyses GTP + H2O = GDP + phosphate + H(+). Its activity is regulated as follows. Regulated by guanine nucleotide exchange factors (GEFs) which promote the exchange of bound GDP for free GTP. Regulated by GTPase activating proteins (GAPs) which increase the GTP hydrolysis activity. Inhibited by GDP dissociation inhibitors (GDIs). The small GTPases Rab are key regulators of intracellular membrane trafficking, from the formation of transport vesicles to their fusion with membranes. Rabs cycle between an inactive GDP-bound form and an active GTP-bound form that is able to recruit to membranes different sets of downstream effectors directly responsible for vesicle formation, movement, tethering and fusion. The physiological function of RAB42 remains undefined. This chain is Ras-related protein Rab-42, found in Mus musculus (Mouse).